The primary structure comprises 147 residues: Receptor activity-modifying protein 3 (147 aa).

A signal peptide spans 1-22 (MKTPAQRLHLLPLLLLLCGECA). Topologically, residues 23–112 (QVCGCNETGM…CTVDRTHWED (90 aa)) are extracellular. Asparagine 28, asparagine 57, asparagine 70, and asparagine 102 each carry an N-linked (GlcNAc...) asparagine glycan. Intrachain disulfides connect cysteine 39/cysteine 71 and cysteine 56/cysteine 103. A helical transmembrane segment spans residues 113–137 (PPDEVLIPLIAVPVVLTVAMAGLVV). Residues 138–147 (WRSKHTDRLL) lie on the Cytoplasmic side of the membrane.

It belongs to the RAMP family. In terms of assembly, heterodimer of CALCRL and RAMP3; interaction induces allosteric modulation of CALCRL function and ligand specificity for adrenomedullin/ADM and intermedin/ADM2. Heterodimer of CALCR and RAMP3; interaction form the receptor complex AMYR3 for amylin/IAPP. Interacts with GPER1. As to expression, expressed predominantly in the testis, embryonic and adult brain and in kidney.

Its subcellular location is the cell membrane. It localises to the membrane. Accessory protein that interacts with and modulates the function of G-protein coupled receptors including calcitonin gene-related peptide type 1 receptor (CALCRL), calcitonin receptor (CALCR) and G-protein coupled estrogen receptor 1 (GPER1). Required for the transport of CALCRL and GPER1 receptors to the plasma membrane. Plays a role in cardioprotection by reducing cardiac hypertrophy and perivascular fibrosis in a GPER1-dependent manner. Together with CALCRL, form a receptor complex for adrenomedullin/ADM and intermedin/ADM2. Together with CALCR, act as a receptor complex for amylin/IAPP. This Mus musculus (Mouse) protein is Receptor activity-modifying protein 3.